The chain runs to 467 residues: Hydroxyacid-oxoacid transhydrogenase, mitochondrial (467 aa).

The residue at position 445 (lysine 445) is an N6-acetyllysine. Residue serine 452 is modified to Phosphoserine.

It belongs to the iron-containing alcohol dehydrogenase family. Hydroxyacid-oxoacid transhydrogenase subfamily.

Its subcellular location is the mitochondrion. It catalyses the reaction (S)-3-hydroxybutanoate + 2-oxoglutarate = (R)-2-hydroxyglutarate + acetoacetate. The enzyme catalyses 4-hydroxybutanoate + 2-oxoglutarate = (R)-2-hydroxyglutarate + succinate semialdehyde. Its function is as follows. Catalyzes the cofactor-independent reversible oxidation of gamma-hydroxybutyrate (GHB) to succinic semialdehyde (SSA) coupled to reduction of 2-ketoglutarate (2-KG) to D-2-hydroxyglutarate (D-2-HG). L-3-hydroxybutyrate (L-3-OHB) is also a substrate for HOT when using 2-KG as hydrogen acceptor, resulting in the formation of D-2-HG. The sequence is that of Hydroxyacid-oxoacid transhydrogenase, mitochondrial (ADHFE1) from Pongo abelii (Sumatran orangutan).